The chain runs to 598 residues: DNA primase (598 aa).

Residues 38-62 form a CHC2-type zinc finger; it reads CPFHDEKTPSFTVSEDKQICHCFGC. The Toprim domain maps to 260–341; it reads DEIILLEGFM…NVYVVQLPSG (82 aa). Mg(2+)-binding residues include glutamate 266, aspartate 310, and aspartate 312.

It belongs to the DnaG primase family. As to quaternary structure, monomer. Interacts with DnaB. Zn(2+) serves as cofactor. It depends on Mg(2+) as a cofactor.

The enzyme catalyses ssDNA + n NTP = ssDNA/pppN(pN)n-1 hybrid + (n-1) diphosphate.. RNA polymerase that catalyzes the synthesis of short RNA molecules used as primers for DNA polymerase during DNA replication. The chain is DNA primase from Staphylococcus epidermidis (strain ATCC 12228 / FDA PCI 1200).